A 199-amino-acid polypeptide reads, in one-letter code: Stress response protein SCP2 (199 aa).

It belongs to the CAPAB/TerDEXZ family.

Its subcellular location is the cytoplasm. In Bacillus subtilis (strain 168), this protein is Stress response protein SCP2 (yceC).